We begin with the raw amino-acid sequence, 290 residues long: 4-hydroxy-tetrahydrodipicolinate synthase (290 aa).

Position 45 (Thr-45) interacts with pyruvate. Tyr-133 acts as the Proton donor/acceptor in catalysis. Catalysis depends on Lys-161, which acts as the Schiff-base intermediate with substrate. Ile-203 is a pyruvate binding site.

This sequence belongs to the DapA family. In terms of assembly, homotetramer; dimer of dimers.

The protein localises to the cytoplasm. The catalysed reaction is L-aspartate 4-semialdehyde + pyruvate = (2S,4S)-4-hydroxy-2,3,4,5-tetrahydrodipicolinate + H2O + H(+). It participates in amino-acid biosynthesis; L-lysine biosynthesis via DAP pathway; (S)-tetrahydrodipicolinate from L-aspartate: step 3/4. Its function is as follows. Catalyzes the condensation of (S)-aspartate-beta-semialdehyde [(S)-ASA] and pyruvate to 4-hydroxy-tetrahydrodipicolinate (HTPA). This is 4-hydroxy-tetrahydrodipicolinate synthase from Cellvibrio japonicus (strain Ueda107) (Pseudomonas fluorescens subsp. cellulosa).